Reading from the N-terminus, the 84-residue chain is M-zodatoxin-Lt2b (84 aa).

Residues 1-22 (MKYFVIALALAVALVCIAESTA) form the signal peptide. Positions 23 to 58 (YEVNEELENELDDLDDAAWLAVAEELQGLEDFEESR) are excised as a propeptide. The Processing quadruplet motif signature appears at 55-58 (EESR).

In terms of processing, cleavage of the propeptide depends on the processing quadruplet motif (XXXR, with at least one of X being E). Expressed by the venom gland.

It localises to the secreted. Functionally, has antimicrobial activity against both Gram-positive and Gram-negative bacteria, and yeasts. Also has a strong hemolytic activity against rabbit erythrocytes. Causes paralysis, but is not lethal when injected into insect (M.domestica) larvae. In Lachesana tarabaevi (Spider), this protein is M-zodatoxin-Lt2b.